Here is a 142-residue protein sequence, read N- to C-terminus: Large ribosomal subunit protein bL19 (142 aa).

It belongs to the bacterial ribosomal protein bL19 family.

Functionally, this protein is located at the 30S-50S ribosomal subunit interface and may play a role in the structure and function of the aminoacyl-tRNA binding site. In Psychrobacter cryohalolentis (strain ATCC BAA-1226 / DSM 17306 / VKM B-2378 / K5), this protein is Large ribosomal subunit protein bL19.